We begin with the raw amino-acid sequence, 810 residues long: Janus kinase and microtubule-interacting protein 2 (810 aa).

Coiled-coil stretches lie at residues 13–102, 148–178, and 207–244; these read EALI…EMSR, ERLKLLQEIADLKTAKKQVDEALSNMIQADK, and RRLMDEIKAKDRIIFSLEKELETQTGYVQKLQLQKEAL. Residues 261 to 274 show a composition bias toward basic and acidic residues; that stretch reads PKREIPGRAGDGSE. Disordered stretches follow at residues 261 to 280 and 437 to 465; these read PKREIPGRAGDGSEHCSSPD and YDEDSMDSETSSMASFRTDRTPATPDDDL. Residues 280-419 are a coiled coil; sequence DLRRNQKRIA…REKLIRRRKH (140 aa). Coiled-coil stretches lie at residues 468-597 and 664-808; these read SLAA…RERR and EKWI…SNRK.

This sequence belongs to the JAKMIP family. As to expression, highly expressed in brain, moderately expressed in thymus, spleen and lung, and weakly expressed in kidney, liver and peripheral blood lymphocytes. Also expressed in adrenal and pituitary glands, as well as testis.

It localises to the golgi apparatus. This Homo sapiens (Human) protein is Janus kinase and microtubule-interacting protein 2 (JAKMIP2).